A 364-amino-acid chain; its full sequence is MGALCSSETYMLDKETYKKQVEHNKMIEQDLDKDRKLKILKLLILGPGESGKSTTIKQIKIIHDEGYSVEEKLIRRHGIFMNILEGIEEIHLAVGRENKSYKNPLSFDHIHEVRMFTENFKKADEADKILGAEVINAIQKYVKDETVAMMLRDKTVYNIDDSTIYFLDNFSRIIQKDYLPTEEDILKSRVPTSGVIQYKIMLKNFNFKIFDVGGQRAQRRKWLHVFDDVHAVLFITSLSEYDQVLREDATVNRMKESLNLFEKICNGRYFINTAMILFLNKIDLFEIKIKHTNITVALTSYKGPQERDSALDYIRKRFVSLNKNKKRSIYEHVTCATDTEQIQVVIDSVIDVVIQHTMQKVGIQ.

Residue Gly2 is the site of N-myristoyl glycine attachment. The S-palmitoyl cysteine moiety is linked to residue Cys5. Residues Lys38–Gln364 form the G-alpha domain. A G1 motif region spans residues Lys41 to Thr54. GTP contacts are provided by residues Gly46–Ser53, Leu186–Thr192, Asp211–Gln215, Asn280–Asp283, and Ala336. Residues Ser53 and Thr192 each coordinate Mg(2+). Positions Asp184–Thr192 are G2 motif. Positions Phe207–Arg216 are G3 motif. Residues Ile276–Asp283 form a G4 motif region. Positions Thr334 to Thr339 are G5 motif.

Belongs to the G-alpha family. In terms of assembly, g proteins are composed of 3 units; alpha, beta and gamma. The alpha chain contains the guanine nucleotide binding site.

Guanine nucleotide-binding proteins (G proteins) are involved as modulators or transducers in various transmembrane signaling systems. In Caenorhabditis briggsae, this protein is Guanine nucleotide-binding protein alpha-8 subunit (gpa-8).